The sequence spans 281 residues: Pantothenate synthetase (281 aa).

Position 30–37 (30–37) interacts with ATP; the sequence is MGYLHEGH. Histidine 37 acts as the Proton donor in catalysis. (R)-pantoate is bound at residue glutamine 61. A beta-alanine-binding site is contributed by glutamine 61. 147–150 is an ATP binding site; sequence GEKD. (R)-pantoate is bound at residue glutamine 153. ATP-binding positions include isoleucine 176 and 184 to 187; that span reads KSSR.

This sequence belongs to the pantothenate synthetase family. As to quaternary structure, homodimer.

The protein resides in the cytoplasm. The enzyme catalyses (R)-pantoate + beta-alanine + ATP = (R)-pantothenate + AMP + diphosphate + H(+). It functions in the pathway cofactor biosynthesis; (R)-pantothenate biosynthesis; (R)-pantothenate from (R)-pantoate and beta-alanine: step 1/1. Its function is as follows. Catalyzes the condensation of pantoate with beta-alanine in an ATP-dependent reaction via a pantoyl-adenylate intermediate. The polypeptide is Pantothenate synthetase (Clostridium botulinum (strain Kyoto / Type A2)).